A 324-amino-acid chain; its full sequence is Quinolinate synthase (324 aa).

Iminosuccinate-binding residues include His39 and Ser56. Cys101 contacts [4Fe-4S] cluster. Iminosuccinate is bound by residues 127-129 and Ser144; that span reads YIN. Cys187 is a [4Fe-4S] cluster binding site. Residues 213–215 and Thr230 each bind iminosuccinate; that span reads HPE. Residue Cys280 participates in [4Fe-4S] cluster binding.

It belongs to the quinolinate synthase family. Type 2 subfamily. The cofactor is [4Fe-4S] cluster.

It is found in the cytoplasm. The enzyme catalyses iminosuccinate + dihydroxyacetone phosphate = quinolinate + phosphate + 2 H2O + H(+). The protein operates within cofactor biosynthesis; NAD(+) biosynthesis; quinolinate from iminoaspartate: step 1/1. Catalyzes the condensation of iminoaspartate with dihydroxyacetone phosphate to form quinolinate. This chain is Quinolinate synthase, found in Nostoc punctiforme (strain ATCC 29133 / PCC 73102).